A 282-amino-acid chain; its full sequence is Biotin synthase (282 aa).

One can recognise a Radical SAM core domain in the interval 1–228 (MQEIFLCSIS…NARLMVAGGR (228 aa)). Residues Cys-17, Cys-21, and Cys-24 each coordinate [4Fe-4S] cluster. [2Fe-2S] cluster is bound by residues Cys-61, Cys-96, Cys-154, and Arg-221.

The protein belongs to the radical SAM superfamily. Biotin synthase family. Homodimer. It depends on [4Fe-4S] cluster as a cofactor. [2Fe-2S] cluster serves as cofactor.

It catalyses the reaction (4R,5S)-dethiobiotin + (sulfur carrier)-SH + 2 reduced [2Fe-2S]-[ferredoxin] + 2 S-adenosyl-L-methionine = (sulfur carrier)-H + biotin + 2 5'-deoxyadenosine + 2 L-methionine + 2 oxidized [2Fe-2S]-[ferredoxin]. It participates in cofactor biosynthesis; biotin biosynthesis; biotin from 7,8-diaminononanoate: step 2/2. In terms of biological role, catalyzes the conversion of dethiobiotin (DTB) to biotin by the insertion of a sulfur atom into dethiobiotin via a radical-based mechanism. In Helicobacter pylori (strain J99 / ATCC 700824) (Campylobacter pylori J99), this protein is Biotin synthase.